Reading from the N-terminus, the 387-residue chain is Galactokinase (387 aa).

33–36 (EHTD) contributes to the substrate binding site. Residues Ser-67 and 123–129 (GAGLSSS) each bind ATP. Residues Ser-129 and Glu-161 each contribute to the Mg(2+) site. Asp-173 functions as the Proton acceptor in the catalytic mechanism. Tyr-223 contributes to the substrate binding site.

This sequence belongs to the GHMP kinase family. GalK subfamily.

The protein localises to the cytoplasm. The enzyme catalyses alpha-D-galactose + ATP = alpha-D-galactose 1-phosphate + ADP + H(+). It participates in carbohydrate metabolism; galactose metabolism. Catalyzes the transfer of the gamma-phosphate of ATP to D-galactose to form alpha-D-galactose-1-phosphate (Gal-1-P). In Lacticaseibacillus casei (Lactobacillus casei), this protein is Galactokinase.